Here is a 585-residue protein sequence, read N- to C-terminus: Arginine--tRNA ligase (585 aa).

Residues 126–136 (PNIAKEMHVGH) carry the 'HIGH' region motif.

The protein belongs to the class-I aminoacyl-tRNA synthetase family. In terms of assembly, monomer.

The protein localises to the cytoplasm. The catalysed reaction is tRNA(Arg) + L-arginine + ATP = L-arginyl-tRNA(Arg) + AMP + diphosphate. The polypeptide is Arginine--tRNA ligase (Crocosphaera subtropica (strain ATCC 51142 / BH68) (Cyanothece sp. (strain ATCC 51142))).